Reading from the N-terminus, the 64-residue chain is Large ribosomal subunit protein bL33 (64 aa).

Belongs to the bacterial ribosomal protein bL33 family.

The sequence is that of Large ribosomal subunit protein bL33 from Prochlorococcus marinus (strain MIT 9313).